The following is a 398-amino-acid chain: Phosphoglycerate kinase (398 aa).

Substrate contacts are provided by residues 21 to 23 (DIN), arginine 37, 60 to 63 (HQGR), arginine 117, and arginine 157. ATP is bound by residues glutamate 332 and 357–360 (GGDT).

This sequence belongs to the phosphoglycerate kinase family. As to quaternary structure, monomer.

It is found in the cytoplasm. It carries out the reaction (2R)-3-phosphoglycerate + ATP = (2R)-3-phospho-glyceroyl phosphate + ADP. It participates in carbohydrate degradation; glycolysis; pyruvate from D-glyceraldehyde 3-phosphate: step 2/5. The chain is Phosphoglycerate kinase from Halobacterium salinarum (strain ATCC 29341 / DSM 671 / R1).